A 344-amino-acid chain; its full sequence is Fructose-1,6-bisphosphatase, cytosolic (344 aa).

Residues glutamate 71, glutamate 100, aspartate 121, leucine 123, and aspartate 124 each coordinate Mg(2+). Substrate-binding positions include 124 to 127 (DGSS), asparagine 215, tyrosine 247, tyrosine 267, and lysine 277. Position 283 (glutamate 283) interacts with Mg(2+).

The protein belongs to the FBPase class 1 family. The cofactor is Mg(2+).

It localises to the cytoplasm. It catalyses the reaction beta-D-fructose 1,6-bisphosphate + H2O = beta-D-fructose 6-phosphate + phosphate. This chain is Fructose-1,6-bisphosphatase, cytosolic, found in Oryza coarctata (Wild rice).